A 204-amino-acid chain; its full sequence is Ribosomal RNA small subunit methyltransferase J (204 aa).

Residues 55-56, 71-72, and aspartate 123 contribute to the S-adenosyl-L-methionine site; these read RD and ER.

It belongs to the methyltransferase superfamily. RsmJ family.

The protein resides in the cytoplasm. The enzyme catalyses guanosine(1516) in 16S rRNA + S-adenosyl-L-methionine = N(2)-methylguanosine(1516) in 16S rRNA + S-adenosyl-L-homocysteine + H(+). Functionally, specifically methylates the guanosine in position 1516 of 16S rRNA. This chain is Ribosomal RNA small subunit methyltransferase J, found in Rhodopseudomonas palustris (strain ATCC BAA-98 / CGA009).